Consider the following 760-residue polypeptide: 5-methyltetrahydropteroyltriglutamate--homocysteine methyltransferase (760 aa).

Residues 17–20 (RELK) and lysine 113 contribute to the 5-methyltetrahydropteroyltri-L-glutamate site. Residues 433–435 (IGS) and glutamate 486 contribute to the L-homocysteine site. L-methionine-binding positions include 433 to 435 (IGS) and glutamate 486. Residues 517–518 (RC) and tryptophan 563 each bind 5-methyltetrahydropteroyltri-L-glutamate. L-homocysteine is bound at residue aspartate 601. Aspartate 601 provides a ligand contact to L-methionine. Glutamate 607 is a 5-methyltetrahydropteroyltri-L-glutamate binding site. Zn(2+)-binding residues include histidine 643, cysteine 645, and glutamate 667. Histidine 696 acts as the Proton donor in catalysis. Cysteine 728 contributes to the Zn(2+) binding site.

It belongs to the vitamin-B12 independent methionine synthase family. It depends on Zn(2+) as a cofactor.

The catalysed reaction is 5-methyltetrahydropteroyltri-L-glutamate + L-homocysteine = tetrahydropteroyltri-L-glutamate + L-methionine. It functions in the pathway amino-acid biosynthesis; L-methionine biosynthesis via de novo pathway; L-methionine from L-homocysteine (MetE route): step 1/1. In terms of biological role, catalyzes the transfer of a methyl group from 5-methyltetrahydrofolate to homocysteine resulting in methionine formation. The chain is 5-methyltetrahydropteroyltriglutamate--homocysteine methyltransferase from Chromobacterium violaceum (strain ATCC 12472 / DSM 30191 / JCM 1249 / CCUG 213 / NBRC 12614 / NCIMB 9131 / NCTC 9757 / MK).